The sequence spans 450 residues: Phosphoglucosamine mutase (450 aa).

Ser102 (phosphoserine intermediate) is an active-site residue. Mg(2+) contacts are provided by Ser102, Asp243, Asp245, and Asp247. Phosphoserine is present on Ser102.

It belongs to the phosphohexose mutase family. Mg(2+) is required as a cofactor. In terms of processing, activated by phosphorylation.

It catalyses the reaction alpha-D-glucosamine 1-phosphate = D-glucosamine 6-phosphate. Catalyzes the conversion of glucosamine-6-phosphate to glucosamine-1-phosphate. The sequence is that of Phosphoglucosamine mutase from Rhizobium etli (strain ATCC 51251 / DSM 11541 / JCM 21823 / NBRC 15573 / CFN 42).